A 355-amino-acid chain; its full sequence is Peptide chain release factor 1 (355 aa).

Q233 is modified (N5-methylglutamine).

This sequence belongs to the prokaryotic/mitochondrial release factor family. Methylated by PrmC. Methylation increases the termination efficiency of RF1.

The protein localises to the cytoplasm. In terms of biological role, peptide chain release factor 1 directs the termination of translation in response to the peptide chain termination codons UAG and UAA. The sequence is that of Peptide chain release factor 1 from Bacillus cereus (strain ATCC 14579 / DSM 31 / CCUG 7414 / JCM 2152 / NBRC 15305 / NCIMB 9373 / NCTC 2599 / NRRL B-3711).